The sequence spans 117 residues: Prefoldin subunit beta (117 aa).

This sequence belongs to the prefoldin subunit beta family. In terms of assembly, heterohexamer of two alpha and four beta subunits.

The protein localises to the cytoplasm. In terms of biological role, molecular chaperone capable of stabilizing a range of proteins. Seems to fulfill an ATP-independent, HSP70-like function in archaeal de novo protein folding. In Pyrococcus horikoshii (strain ATCC 700860 / DSM 12428 / JCM 9974 / NBRC 100139 / OT-3), this protein is Prefoldin subunit beta (pfdB).